A 207-amino-acid chain; its full sequence is Lipid A acyltransferase PagP (207 aa).

Residues 1-24 (MKFDLTTAYTLSIPLLASSGTVLA) form the signal peptide. Active-site residues include histidine 79, aspartate 122, and serine 123.

Belongs to the lipid A palmitoyltransferase family. Homodimer.

The protein localises to the cell outer membrane. The catalysed reaction is a lipid A + a 1,2-diacyl-sn-glycero-3-phosphocholine = a hepta-acyl lipid A + a 2-acyl-sn-glycero-3-phosphocholine. It catalyses the reaction a lipid IVA + a 1,2-diacyl-sn-glycero-3-phosphocholine = a lipid IVB + a 2-acyl-sn-glycero-3-phosphocholine. It carries out the reaction a lipid IIA + a 1,2-diacyl-sn-glycero-3-phosphocholine = a lipid IIB + a 2-acyl-sn-glycero-3-phosphocholine. Transfers a fatty acid residue from the sn-1 position of a phospholipid to the N-linked hydroxyfatty acid chain on the proximal unit of lipid A or its precursors. This is Lipid A acyltransferase PagP from Photorhabdus asymbiotica subsp. asymbiotica (strain ATCC 43949 / 3105-77) (Xenorhabdus luminescens (strain 2)).